Consider the following 178-residue polypeptide: Ribosomal RNA small subunit methyltransferase G (178 aa).

Residues Gly54, Leu59, 105 to 106, and Arg120 each bind S-adenosyl-L-methionine; that span reads LE.

The protein belongs to the methyltransferase superfamily. RNA methyltransferase RsmG family.

Its subcellular location is the cytoplasm. The enzyme catalyses guanosine(527) in 16S rRNA + S-adenosyl-L-methionine = N(7)-methylguanosine(527) in 16S rRNA + S-adenosyl-L-homocysteine. Functionally, specifically methylates the N7 position of guanine in position 527 of 16S rRNA. This is Ribosomal RNA small subunit methyltransferase G from Helicobacter pylori (strain HPAG1).